A 337-amino-acid chain; its full sequence is MRLDDEPENALVVSSSPKTVVASGNVKYKGVVQQQNGHWGAQIYADHKRIWLGTFKSADEAATAYDSASIKLRSFDANSHRNFPWSTITLNEPDFQNCYTTETVLNMIRDGSYQHKFRDFLRIRSQIVASINIGGPKQARGEVNQESDKCFSCTQLFQKELTPSDVGKLNRLVIPKKYAVKYMPFISADQSEKEEGEIVGSVEDVEVVFYDRAMRQWKFRYCYWKSSQSFVFTRGWNSFVKEKNLKEKDVIAFYTCDVPNNVKTLEGQRKNFLMIDVHCFSDNGSVVAEEVSMTVHDSSVQVKKTENLVSSMLEDKETKSEENKGGFMLFGVRIECP.

Positions 27–84 form a DNA-binding region, AP2/ERF; the sequence is KYKGVVQQQNGHWGAQIYADHKRIWLGTFKSADEAATAYDSASIKLRSFDANSHRNFP. Positions 157-271 form a DNA-binding region, TF-B3; it reads FQKELTPSDV…VKTLEGQRKN (115 aa).

Belongs to the AP2/ERF transcription factor family. RAV subfamily.

The protein resides in the nucleus. Functionally, probably acts as a transcriptional activator. Binds to the GCC-box pathogenesis-related promoter element. May be involved in the regulation of gene expression by stress factors and by components of stress signal transduction pathways. The sequence is that of AP2/ERF and B3 domain-containing transcription factor At1g50680 from Arabidopsis thaliana (Mouse-ear cress).